A 162-amino-acid polypeptide reads, in one-letter code: Large ribosomal subunit protein uL10 (162 aa).

Belongs to the universal ribosomal protein uL10 family. As to quaternary structure, part of the ribosomal stalk of the 50S ribosomal subunit. The N-terminus interacts with L11 and the large rRNA to form the base of the stalk. The C-terminus forms an elongated spine to which L12 dimers bind in a sequential fashion forming a multimeric L10(L12)X complex.

In terms of biological role, forms part of the ribosomal stalk, playing a central role in the interaction of the ribosome with GTP-bound translation factors. The sequence is that of Large ribosomal subunit protein uL10 (rplJ) from Borreliella burgdorferi (strain ATCC 35210 / DSM 4680 / CIP 102532 / B31) (Borrelia burgdorferi).